Reading from the N-terminus, the 430-residue chain is Glutamate-1-semialdehyde 2,1-aminomutase (430 aa).

Residue K267 is modified to N6-(pyridoxal phosphate)lysine.

Belongs to the class-III pyridoxal-phosphate-dependent aminotransferase family. HemL subfamily. As to quaternary structure, homodimer. Requires pyridoxal 5'-phosphate as cofactor.

It localises to the cytoplasm. It carries out the reaction (S)-4-amino-5-oxopentanoate = 5-aminolevulinate. The protein operates within porphyrin-containing compound metabolism; protoporphyrin-IX biosynthesis; 5-aminolevulinate from L-glutamyl-tRNA(Glu): step 2/2. This Cytophaga hutchinsonii (strain ATCC 33406 / DSM 1761 / CIP 103989 / NBRC 15051 / NCIMB 9469 / D465) protein is Glutamate-1-semialdehyde 2,1-aminomutase.